Consider the following 474-residue polypeptide: Aspartyl/glutamyl-tRNA(Asn/Gln) amidotransferase subunit B (474 aa).

The protein belongs to the GatB/GatE family. GatB subfamily. Heterotrimer of A, B and C subunits.

The catalysed reaction is L-glutamyl-tRNA(Gln) + L-glutamine + ATP + H2O = L-glutaminyl-tRNA(Gln) + L-glutamate + ADP + phosphate + H(+). It carries out the reaction L-aspartyl-tRNA(Asn) + L-glutamine + ATP + H2O = L-asparaginyl-tRNA(Asn) + L-glutamate + ADP + phosphate + 2 H(+). In terms of biological role, allows the formation of correctly charged Asn-tRNA(Asn) or Gln-tRNA(Gln) through the transamidation of misacylated Asp-tRNA(Asn) or Glu-tRNA(Gln) in organisms which lack either or both of asparaginyl-tRNA or glutaminyl-tRNA synthetases. The reaction takes place in the presence of glutamine and ATP through an activated phospho-Asp-tRNA(Asn) or phospho-Glu-tRNA(Gln). The sequence is that of Aspartyl/glutamyl-tRNA(Asn/Gln) amidotransferase subunit B from Desulfotalea psychrophila (strain LSv54 / DSM 12343).